A 421-amino-acid chain; its full sequence is UDP-N-acetylglucosamine 1-carboxyvinyltransferase (421 aa).

A phosphoenolpyruvate-binding site is contributed by 22–23 (KN). Position 91 (Arg-91) interacts with UDP-N-acetyl-alpha-D-glucosamine. Cys-115 acts as the Proton donor in catalysis. A 2-(S-cysteinyl)pyruvic acid O-phosphothioketal modification is found at Cys-115. UDP-N-acetyl-alpha-D-glucosamine is bound by residues 120–124 (RPVDL), 160–163 (KVSV), Asp-305, and Ile-327.

This sequence belongs to the EPSP synthase family. MurA subfamily.

The protein localises to the cytoplasm. It carries out the reaction phosphoenolpyruvate + UDP-N-acetyl-alpha-D-glucosamine = UDP-N-acetyl-3-O-(1-carboxyvinyl)-alpha-D-glucosamine + phosphate. Its pathway is cell wall biogenesis; peptidoglycan biosynthesis. Its function is as follows. Cell wall formation. Adds enolpyruvyl to UDP-N-acetylglucosamine. This Photorhabdus laumondii subsp. laumondii (strain DSM 15139 / CIP 105565 / TT01) (Photorhabdus luminescens subsp. laumondii) protein is UDP-N-acetylglucosamine 1-carboxyvinyltransferase.